A 173-amino-acid polypeptide reads, in one-letter code: Ribosomal RNA large subunit methyltransferase H (173 aa).

Positions 89 and 121 each coordinate S-adenosyl-L-methionine.

Belongs to the RNA methyltransferase RlmH family. Homodimer.

The protein localises to the cytoplasm. It carries out the reaction pseudouridine(1915) in 23S rRNA + S-adenosyl-L-methionine = N(3)-methylpseudouridine(1915) in 23S rRNA + S-adenosyl-L-homocysteine + H(+). Functionally, specifically methylates the pseudouridine at position 1915 (m3Psi1915) in 23S rRNA. The sequence is that of Ribosomal RNA large subunit methyltransferase H from Chelativorans sp. (strain BNC1).